Here is a 206-residue protein sequence, read N- to C-terminus: Protein-methionine-sulfoxide reductase heme-binding subunit MsrQ (206 aa).

Helical transmembrane passes span 13-33 (IAIW…INLG), 79-99 (LLGL…SILE), 116-136 (PYLT…LTST), 147-167 (WQKL…HYLW), and 169-189 (VKTL…LLLL).

Belongs to the MsrQ family. Heterodimer of a catalytic subunit (MsrP) and a heme-binding subunit (MsrQ). It depends on FMN as a cofactor. Heme b serves as cofactor.

Its subcellular location is the cell inner membrane. Functionally, part of the MsrPQ system that repairs oxidized periplasmic proteins containing methionine sulfoxide residues (Met-O), using respiratory chain electrons. Thus protects these proteins from oxidative-stress damage caused by reactive species of oxygen and chlorine generated by the host defense mechanisms. MsrPQ is essential for the maintenance of envelope integrity under bleach stress, rescuing a wide series of structurally unrelated periplasmic proteins from methionine oxidation. MsrQ provides electrons for reduction to the reductase catalytic subunit MsrP, using the quinone pool of the respiratory chain. The polypeptide is Protein-methionine-sulfoxide reductase heme-binding subunit MsrQ (Yersinia pestis bv. Antiqua (strain Antiqua)).